The sequence spans 281 residues: 39kDa core protein OPG130 (281 aa).

A compositionally biased stretch (polar residues) spans 1–22 (MDFFNKFSQGLAESSTPKSSIY). 3 disordered regions span residues 1–33 (MDFF…DTKK), 91–112 (ILLP…TSSD), and 149–192 (NKDQ…PQPP). Residues 24–33 (SEEKDPDTKK) are compositionally biased toward basic and acidic residues. Positions 94–112 (PSSTAPTPKPRQQTNTSSD) are enriched in polar residues. A compositionally biased stretch (low complexity) spans 154–175 (TTTPPSTQPSQTLPTTTCTQQS).

This sequence belongs to the orthopoxvirus OPG130 family. As to quaternary structure, interacts with OPG136 and its cleaved form. Post-translationally, its phosphorylation state is regulated by the OPG054 kinase and the OPG106 phosphatase.

It is found in the virion. Its subcellular location is the host endoplasmic reticulum-Golgi intermediate compartment membrane. In terms of biological role, component of the virion core. Participates in virion assembly. This Vaccinia virus (strain Copenhagen) (VACV) protein is 39kDa core protein OPG130 (OPG130).